The primary structure comprises 202 residues: FMN-dependent NADH:quinone oxidoreductase (202 aa).

FMN-binding positions include Ser10 and 95 to 98; that span reads MYNF.

It belongs to the azoreductase type 1 family. In terms of assembly, homodimer. FMN serves as cofactor.

It carries out the reaction 2 a quinone + NADH + H(+) = 2 a 1,4-benzosemiquinone + NAD(+). The enzyme catalyses N,N-dimethyl-1,4-phenylenediamine + anthranilate + 2 NAD(+) = 2-(4-dimethylaminophenyl)diazenylbenzoate + 2 NADH + 2 H(+). Its function is as follows. Quinone reductase that provides resistance to thiol-specific stress caused by electrophilic quinones. Also exhibits azoreductase activity. Catalyzes the reductive cleavage of the azo bond in aromatic azo compounds to the corresponding amines. The protein is FMN-dependent NADH:quinone oxidoreductase of Pseudoalteromonas atlantica (strain T6c / ATCC BAA-1087).